Reading from the N-terminus, the 338-residue chain is Large ribosomal subunit protein uL10 (338 aa).

The segment at 302–338 (IAAQPQPAEEAEEKVEEEEEEEKEEEEALAGLGALFG) is disordered. A compositionally biased stretch (acidic residues) spans 310–329 (EEAEEKVEEEEEEEKEEEEA).

Belongs to the universal ribosomal protein uL10 family. In terms of assembly, part of the 50S ribosomal subunit. Forms part of the ribosomal stalk which helps the ribosome interact with GTP-bound translation factors. Forms a heptameric L10(L12)2(L12)2(L12)2 complex, where L10 forms an elongated spine to which the L12 dimers bind in a sequential fashion.

Functionally, forms part of the ribosomal stalk, playing a central role in the interaction of the ribosome with GTP-bound translation factors. The sequence is that of Large ribosomal subunit protein uL10 from Thermococcus sibiricus (strain DSM 12597 / MM 739).